The following is a 152-amino-acid chain: Transcriptional regulator MraZ (152 aa).

SpoVT-AbrB domains lie at 5–52 (ASAI…PLHE) and 81–124 (AHEV…DEQA).

The protein belongs to the MraZ family. Forms oligomers.

The protein localises to the cytoplasm. Its subcellular location is the nucleoid. The chain is Transcriptional regulator MraZ from Shewanella sp. (strain MR-7).